The chain runs to 215 residues: Endoplasmic reticulum vesicle protein 25 (215 aa).

A signal peptide spans methionine 1–glycine 21. The Lumenal segment spans residues leucine 22–lysine 184. In terms of domain architecture, GOLD spans proline 34–serine 125. A helical transmembrane segment spans residues tryptophan 185–leucine 205. Topologically, residues arginine 206–isoleucine 215 are cytoplasmic.

The protein belongs to the EMP24/GP25L family.

It is found in the endoplasmic reticulum membrane. The protein resides in the golgi apparatus membrane. Its function is as follows. Constituent of COPII-coated endoplasmic reticulum-derived transport vesicles. Required for efficient transport of a subset of secretory proteins to the Golgi. Facilitates retrograde transport from the Golgi to the endoplasmic reticulum. The protein is Endoplasmic reticulum vesicle protein 25 (ERV25) of Candida albicans (strain SC5314 / ATCC MYA-2876) (Yeast).